Here is a 166-residue protein sequence, read N- to C-terminus: MNRTALYAGSFDPVTNGHVDVIRQACRLVPRLVIAIGVHPGKTPLFGAEERAELLREICAPLAAAEGAALDVVTFDDLAVSAARRVGASLFIRGLRDGTDLDYEMQLAGMNGAMAPEVQTVFLPASTGVRPITATLVRQIAAMGGDVRPFVPDLVAERLRARFAKP.

Ser10 is a binding site for substrate. ATP-binding positions include Ser10–Phe11 and His18. Residues Lys42, Ala79, and Arg93 each coordinate substrate. ATP-binding positions include Gly94 to Arg96, Glu104, and Val129 to Thr135.

Belongs to the bacterial CoaD family. Homohexamer. It depends on Mg(2+) as a cofactor.

It is found in the cytoplasm. It carries out the reaction (R)-4'-phosphopantetheine + ATP + H(+) = 3'-dephospho-CoA + diphosphate. Its pathway is cofactor biosynthesis; coenzyme A biosynthesis; CoA from (R)-pantothenate: step 4/5. In terms of biological role, reversibly transfers an adenylyl group from ATP to 4'-phosphopantetheine, yielding dephospho-CoA (dPCoA) and pyrophosphate. This chain is Phosphopantetheine adenylyltransferase, found in Methylobacterium sp. (strain 4-46).